Here is a 260-residue protein sequence, read N- to C-terminus: NAD kinase (260 aa).

Asp54 acts as the Proton acceptor in catalysis. NAD(+) is bound by residues 54 to 55 (DG), 123 to 124 (ND), Arg150, Asp152, and 163 to 168 (TAYSLS).

The protein belongs to the NAD kinase family. The cofactor is a divalent metal cation.

The protein resides in the cytoplasm. The catalysed reaction is NAD(+) + ATP = ADP + NADP(+) + H(+). Functionally, involved in the regulation of the intracellular balance of NAD and NADP, and is a key enzyme in the biosynthesis of NADP. Catalyzes specifically the phosphorylation on 2'-hydroxyl of the adenosine moiety of NAD to yield NADP. In Caldicellulosiruptor saccharolyticus (strain ATCC 43494 / DSM 8903 / Tp8T 6331), this protein is NAD kinase.